The chain runs to 200 residues: Dual-action ribosomal maturation protein DarP (200 aa).

2 disordered regions span residues 1-25 and 177-200; these read MTRK…DRPS and TASG…DDEA. Basic and acidic residues predominate over residues 12-25; that stretch reads HAAEVDDNGYDRPS. Residues 184 to 200 are compositionally biased toward acidic residues; sequence GDDEAADEAGDDHDDEA.

It belongs to the DarP family.

It localises to the cytoplasm. Member of a network of 50S ribosomal subunit biogenesis factors which assembles along the 30S-50S interface, preventing incorrect 23S rRNA structures from forming. Promotes peptidyl transferase center (PTC) maturation. The sequence is that of Dual-action ribosomal maturation protein DarP from Burkholderia ambifaria (strain MC40-6).